The primary structure comprises 664 residues: MFKLVSEFEPTGDQPQAIEKLVEGLNRGMRFQTLLGVTGSGKTFTMANVIARVNRPALVISPNKTLAAQLYQEFKTFFPENRVEFFISYYDYYQPEAYIPTKDLYIEKNADINDVIVRMRMSTLKSVRTRRDVIVVASVSCIYATGDPNDFDRMNIKLSVGERLDVFELAEKLAKIGYQRTEDVSLSGCFRIRGDTLEIYPTYQDEGIRVEFFGDEIDAISLIDRFNRTTLERLDKVIIYPAVEFVTTEEKLRRAIESIKEELRERLAELKKQGKVLEYERLKQRTLNDIELLETMGYCPGIENYSRHFDGRKPGEPPYTLLDYFDDDFVVFIDESHITVPQLRAMYNGDRSRKKNLVEYGFRLPSAYDNRPLTFEEFLKKVGQIVFVSATPGDFELSVSEQVVEQIIRPTGLVDPEVEVRPTRGQVDDLINEIVKVKQRGERALVTVLTKKTAELLSEHLTELGIKSLYLHSELDAIERVEVLKKLRRGDVDVVVGVNLLREGLDLPEVSLVAIMDADTEGFLRSETTLIQIIGRTARNVNGKVIMYADRITNAMKRAIEETNRRRRIQLEYNKKHGITPRSIVKPLEIEVFEQFMVKEEPAEYGDTIKNIFSMKESLSLEEYVALLEEEMYRAASELRYEDAAALRDELFRVKETLKKKKGR.

The Helicase ATP-binding domain maps to glutamate 23 to arginine 180. Glycine 36–threonine 43 serves as a coordination point for ATP. A Beta-hairpin motif is present at residues tyrosine 89–isoleucine 112. One can recognise a Helicase C-terminal domain in the interval glutamine 426–leucine 588. One can recognise a UVR domain in the interval glutamate 622–threonine 657.

It belongs to the UvrB family. Forms a heterotetramer with UvrA during the search for lesions. Interacts with UvrC in an incision complex.

It is found in the cytoplasm. In terms of biological role, the UvrABC repair system catalyzes the recognition and processing of DNA lesions. A damage recognition complex composed of 2 UvrA and 2 UvrB subunits scans DNA for abnormalities. Upon binding of the UvrA(2)B(2) complex to a putative damaged site, the DNA wraps around one UvrB monomer. DNA wrap is dependent on ATP binding by UvrB and probably causes local melting of the DNA helix, facilitating insertion of UvrB beta-hairpin between the DNA strands. Then UvrB probes one DNA strand for the presence of a lesion. If a lesion is found the UvrA subunits dissociate and the UvrB-DNA preincision complex is formed. This complex is subsequently bound by UvrC and the second UvrB is released. If no lesion is found, the DNA wraps around the other UvrB subunit that will check the other stand for damage. The chain is UvrABC system protein B from Thermotoga neapolitana (strain ATCC 49049 / DSM 4359 / NBRC 107923 / NS-E).